The chain runs to 300 residues: tRNA pseudouridine synthase B (300 aa).

Asp-38 (nucleophile) is an active-site residue.

The protein belongs to the pseudouridine synthase TruB family. Type 1 subfamily.

The enzyme catalyses uridine(55) in tRNA = pseudouridine(55) in tRNA. In terms of biological role, responsible for synthesis of pseudouridine from uracil-55 in the psi GC loop of transfer RNAs. This chain is tRNA pseudouridine synthase B, found in Dehalococcoides mccartyi (strain CBDB1).